The sequence spans 195 residues: Probable GTP-binding protein EngB (195 aa).

The EngB-type G domain maps to 24–195 (ELPEIALAGR…EAWDAILEKL (172 aa)). Residues 32–39 (GRSNVGKS), 59–63 (GKTQL), 77–80 (DVPG), 144–147 (TKAD), and 176–178 (FSS) each bind GTP. Positions 39 and 61 each coordinate Mg(2+).

It belongs to the TRAFAC class TrmE-Era-EngA-EngB-Septin-like GTPase superfamily. EngB GTPase family. Mg(2+) is required as a cofactor.

In terms of biological role, necessary for normal cell division and for the maintenance of normal septation. This chain is Probable GTP-binding protein EngB, found in Streptococcus pneumoniae (strain JJA).